An 88-amino-acid chain; its full sequence is Protein GOLVEN 10 (88 aa).

The N-terminal stretch at 1–22 is a signal peptide; the sequence is MSSIHVASMILLLFLFLHHSDS. A propeptide spanning residues 23-75 is cleaved from the precursor; sequence RHLDNVHITASRFSLVKDQNVVSSSTSKEPVKVSRFVPGPLKHHHRRPPLLFA. Residues 44 to 88 are disordered; sequence VSSSTSKEPVKVSRFVPGPLKHHHRRPPLLFADYPKPSTRPPRHN. The residue at position 77 (Tyr-77) is a Sulfotyrosine. Hydroxyproline is present on Pro-85.

The protein belongs to the RGF family. In terms of assembly, binds to LRR receptor-like serine/threonine-protein kinases RGI1, RGI2 and RGI3 to trigger their dimerization with SERK proteins and subsequent signaling. As to expression, expressed in roots, shoots, leaves and flowers.

It localises to the secreted. The protein resides in the endoplasmic reticulum. Its function is as follows. Signaling peptide (root growth factor) that maintains the postembryonic root stem cell niche. Regulates the pattern of root growth and lateral root development by modulating the length and the number of cortical cells in the root apical meristem (RAM), and the anticlinal asymmetric cell divisions in lateral root initiation cells. The chain is Protein GOLVEN 10 from Arabidopsis thaliana (Mouse-ear cress).